Here is a 335-residue protein sequence, read N- to C-terminus: Erlin-2-A (335 aa).

At 1–2 (MS) the chain is on the cytoplasmic side. Residues 3–23 (HAGAIVGLGVALIAAALFSAI) traverse the membrane as a helical segment. Residues 24 to 335 (HKIEEGHVGV…GLDEAASAEE (312 aa)) are Lumenal-facing. Asn-106 carries an N-linked (GlcNAc...) asparagine glycan.

This sequence belongs to the band 7/mec-2 family.

The protein resides in the endoplasmic reticulum membrane. Its function is as follows. Mediates the endoplasmic reticulum-associated degradation (ERAD) of inositol 1,4,5-trisphosphate receptors (IP3Rs). Promotes sterol-accelerated ERAD of HMGCR. Involved in regulation of cellular cholesterol homeostasis by regulation the SREBP signaling pathway. The polypeptide is Erlin-2-A (erlin2-a) (Xenopus laevis (African clawed frog)).